The following is a 92-amino-acid chain: Small ribosomal subunit protein uS19 (92 aa).

This sequence belongs to the universal ribosomal protein uS19 family.

In terms of biological role, protein S19 forms a complex with S13 that binds strongly to the 16S ribosomal RNA. The sequence is that of Small ribosomal subunit protein uS19 from Mycoplasmopsis agalactiae (strain NCTC 10123 / CIP 59.7 / PG2) (Mycoplasma agalactiae).